The chain runs to 103 residues: Large ribosomal subunit protein bL21 (103 aa).

Belongs to the bacterial ribosomal protein bL21 family. Part of the 50S ribosomal subunit. Contacts protein L20.

Its function is as follows. This protein binds to 23S rRNA in the presence of protein L20. In Acidovorax ebreus (strain TPSY) (Diaphorobacter sp. (strain TPSY)), this protein is Large ribosomal subunit protein bL21.